A 359-amino-acid polypeptide reads, in one-letter code: tRNA-specific 2-thiouridylase MnmA (359 aa).

Residues 6–13 and Leu-32 each bind ATP; that span reads AMSGGVDS. The active-site Nucleophile is Cys-101. Cysteines 101 and 193 form a disulfide. ATP is bound at residue Gly-125. The interaction with tRNA stretch occupies residues 143 to 145; sequence KDQ. Cys-193 functions as the Cysteine persulfide intermediate in the catalytic mechanism.

The protein belongs to the MnmA/TRMU family.

Its subcellular location is the cytoplasm. The enzyme catalyses S-sulfanyl-L-cysteinyl-[protein] + uridine(34) in tRNA + AH2 + ATP = 2-thiouridine(34) in tRNA + L-cysteinyl-[protein] + A + AMP + diphosphate + H(+). Functionally, catalyzes the 2-thiolation of uridine at the wobble position (U34) of tRNA, leading to the formation of s(2)U34. In Mycobacterium sp. (strain KMS), this protein is tRNA-specific 2-thiouridylase MnmA.